A 766-amino-acid chain; its full sequence is Single-minded homolog 1 (766 aa).

Residues 1-53 (MKEKSKNAARTRREKENSEFYELAKLLPLPSAITSQLDKASIIRLTTSYLKMR) form the bHLH domain. PAS domains lie at 77-147 (GREL…QPYH) and 218-288 (PPSA…LVKG). In terms of domain architecture, PAC spans 292–335 (TKYYRFLAKHGGWVWVQSYATIVHNSRSSRPHCIVSVNYVLTDT). Residues 336–766 (EYKGLQLSLD…GTSVIITNGS (431 aa)) enclose the Single-minded C-terminal domain. Residues 353–365 (AFSYTSSSTPTMT) are compositionally biased toward polar residues. Disordered stretches follow at residues 353-431 (AFSY…SQHD), 528-563 (WDED…EPSK), and 642-662 (SPRE…SSPN). The Nuclear localization signal signature appears at 368–387 (RKGAKSRLSSSKSKSRTSPY). The span at 373–385 (SRLSSSKSKSRTS) shows a compositional bias: low complexity. Over residues 394-404 (HTERSESDHDS) the composition is skewed to basic and acidic residues. Residues 649–662 (DNSPTALSRISSPN) show a composition bias toward polar residues.

Efficient DNA binding requires dimerization with another bHLH protein. Heterodimer; forms a heterodimer with ARNT, ARNT2.

The protein resides in the nucleus. In terms of biological role, transcriptional factor that may have pleiotropic effects during embryogenesis and in the adult. This is Single-minded homolog 1 (SIM1) from Pan troglodytes (Chimpanzee).